The chain runs to 442 residues: 3-phosphoshikimate 1-carboxyvinyltransferase (442 aa).

Residues K25, S26, and R30 each contribute to the 3-phosphoshikimate site. K25 lines the phosphoenolpyruvate pocket. G96 and R124 together coordinate phosphoenolpyruvate. Residues S171, S172, Q173, S203, D325, and K352 each coordinate 3-phosphoshikimate. Residue Q173 coordinates phosphoenolpyruvate. D325 (proton acceptor) is an active-site residue. Phosphoenolpyruvate is bound by residues R356, R400, and K425.

This sequence belongs to the EPSP synthase family. In terms of assembly, monomer.

It is found in the cytoplasm. It catalyses the reaction 3-phosphoshikimate + phosphoenolpyruvate = 5-O-(1-carboxyvinyl)-3-phosphoshikimate + phosphate. The protein operates within metabolic intermediate biosynthesis; chorismate biosynthesis; chorismate from D-erythrose 4-phosphate and phosphoenolpyruvate: step 6/7. Its function is as follows. Catalyzes the transfer of the enolpyruvyl moiety of phosphoenolpyruvate (PEP) to the 5-hydroxyl of shikimate-3-phosphate (S3P) to produce enolpyruvyl shikimate-3-phosphate and inorganic phosphate. The chain is 3-phosphoshikimate 1-carboxyvinyltransferase from Bordetella bronchiseptica (strain ATCC BAA-588 / NCTC 13252 / RB50) (Alcaligenes bronchisepticus).